A 293-amino-acid chain; its full sequence is Pantothenate synthetase (293 aa).

Position 30-37 (30-37) interacts with ATP; the sequence is MGYLHKGH. Histidine 37 serves as the catalytic Proton donor. Glutamine 61 is a (R)-pantoate binding site. Beta-alanine is bound at residue glutamine 61. 147–150 serves as a coordination point for ATP; sequence GEKD. Glutamine 153 is a (R)-pantoate binding site. ATP-binding positions include valine 176 and 184–187; that span reads CSSR.

The protein belongs to the pantothenate synthetase family. As to quaternary structure, homodimer.

Its subcellular location is the cytoplasm. The catalysed reaction is (R)-pantoate + beta-alanine + ATP = (R)-pantothenate + AMP + diphosphate + H(+). The protein operates within cofactor biosynthesis; (R)-pantothenate biosynthesis; (R)-pantothenate from (R)-pantoate and beta-alanine: step 1/1. Catalyzes the condensation of pantoate with beta-alanine in an ATP-dependent reaction via a pantoyl-adenylate intermediate. The polypeptide is Pantothenate synthetase (Brucella abortus (strain S19)).